Consider the following 397-residue polypeptide: 1-deoxy-D-xylulose 5-phosphate reductoisomerase (397 aa).

Residues S10, G11, S12, I13, A36, R37, and N124 each coordinate NADPH. 1-deoxy-D-xylulose 5-phosphate is bound at residue K125. E126 lines the NADPH pocket. D150 is a Mn(2+) binding site. Residues S151, E152, S186, and H209 each coordinate 1-deoxy-D-xylulose 5-phosphate. Position 152 (E152) interacts with Mn(2+). G215 contacts NADPH. The 1-deoxy-D-xylulose 5-phosphate site is built by S222, N227, K228, and E231. E231 contributes to the Mn(2+) binding site.

Belongs to the DXR family. Mg(2+) is required as a cofactor. Mn(2+) serves as cofactor.

It catalyses the reaction 2-C-methyl-D-erythritol 4-phosphate + NADP(+) = 1-deoxy-D-xylulose 5-phosphate + NADPH + H(+). It functions in the pathway isoprenoid biosynthesis; isopentenyl diphosphate biosynthesis via DXP pathway; isopentenyl diphosphate from 1-deoxy-D-xylulose 5-phosphate: step 1/6. Functionally, catalyzes the NADPH-dependent rearrangement and reduction of 1-deoxy-D-xylulose-5-phosphate (DXP) to 2-C-methyl-D-erythritol 4-phosphate (MEP). The chain is 1-deoxy-D-xylulose 5-phosphate reductoisomerase from Aeromonas hydrophila subsp. hydrophila (strain ATCC 7966 / DSM 30187 / BCRC 13018 / CCUG 14551 / JCM 1027 / KCTC 2358 / NCIMB 9240 / NCTC 8049).